We begin with the raw amino-acid sequence, 279 residues long: Oxygen-dependent coproporphyrinogen-III oxidase (279 aa).

Serine 102 is a substrate binding site. Positions 106 and 116 each coordinate a divalent metal cation. Histidine 116 functions as the Proton donor in the catalytic mechanism. Substrate is bound at residue 118–120; the sequence is NTR. The a divalent metal cation site is built by histidine 149 and histidine 179. Positions 244–279 are important for dimerization; the sequence is YVEFNLLYDRGTKFGLMTDGNIEAILMSLPPVVKFN.

This sequence belongs to the aerobic coproporphyrinogen-III oxidase family. Homodimer. Requires a divalent metal cation as cofactor.

It localises to the cytoplasm. It catalyses the reaction coproporphyrinogen III + O2 + 2 H(+) = protoporphyrinogen IX + 2 CO2 + 2 H2O. Its pathway is porphyrin-containing compound metabolism; protoporphyrin-IX biosynthesis; protoporphyrinogen-IX from coproporphyrinogen-III (O2 route): step 1/1. Functionally, involved in the heme biosynthesis. Catalyzes the aerobic oxidative decarboxylation of propionate groups of rings A and B of coproporphyrinogen-III to yield the vinyl groups in protoporphyrinogen-IX. The protein is Oxygen-dependent coproporphyrinogen-III oxidase of Rickettsia typhi (strain ATCC VR-144 / Wilmington).